Consider the following 506-residue polypeptide: 2,3-bisphosphoglycerate-independent phosphoglycerate mutase (506 aa).

D13 and S63 together coordinate Mn(2+). Catalysis depends on S63, which acts as the Phosphoserine intermediate. Substrate-binding positions include H124, 153–154 (RD), R183, R189, 254–257 (RADR), and K330. Mn(2+) contacts are provided by D396, H400, D437, H438, and H456.

Belongs to the BPG-independent phosphoglycerate mutase family. In terms of assembly, monomer. It depends on Mn(2+) as a cofactor.

It carries out the reaction (2R)-2-phosphoglycerate = (2R)-3-phosphoglycerate. It participates in carbohydrate degradation; glycolysis; pyruvate from D-glyceraldehyde 3-phosphate: step 3/5. In terms of biological role, catalyzes the interconversion of 2-phosphoglycerate and 3-phosphoglycerate. This is 2,3-bisphosphoglycerate-independent phosphoglycerate mutase from Cereibacter sphaeroides (strain ATCC 17029 / ATH 2.4.9) (Rhodobacter sphaeroides).